We begin with the raw amino-acid sequence, 314 residues long: Acetyl-coenzyme A carboxylase carboxyl transferase subunit alpha (314 aa).

Positions 32-289 constitute a CoA carboxyltransferase C-terminal domain; that stretch reads EIDMLEASLE…KSAFVAQLDS (258 aa).

This sequence belongs to the AccA family. Acetyl-CoA carboxylase is a heterohexamer composed of biotin carboxyl carrier protein (AccB), biotin carboxylase (AccC) and two subunits each of ACCase subunit alpha (AccA) and ACCase subunit beta (AccD).

It is found in the cytoplasm. The enzyme catalyses N(6)-carboxybiotinyl-L-lysyl-[protein] + acetyl-CoA = N(6)-biotinyl-L-lysyl-[protein] + malonyl-CoA. The protein operates within lipid metabolism; malonyl-CoA biosynthesis; malonyl-CoA from acetyl-CoA: step 1/1. Functionally, component of the acetyl coenzyme A carboxylase (ACC) complex. First, biotin carboxylase catalyzes the carboxylation of biotin on its carrier protein (BCCP) and then the CO(2) group is transferred by the carboxyltransferase to acetyl-CoA to form malonyl-CoA. This Staphylococcus aureus (strain JH9) protein is Acetyl-coenzyme A carboxylase carboxyl transferase subunit alpha.